The following is a 317-amino-acid chain: MNIKKAIERVPGGMMVVPLVIGAVINTFAPQALEIGGFTTALFKNGAAPLIGAFLLCMGAGISVKAAPQALLQGGTITLTKLLVAIGIGLGVEHLFGAEGIFGLSGVAIIAAMSNSNGGLYAALVGEFGNERDVGAISILSLNDGPFFTMIALGAAGMANIPIMALVAVLVPLVVGMILGNLDPHMRDFLTKGGPLLIPFFAFALGAGINLEMLLQGGLAGILLGVLTTFVGGFFNIRADRLVGGTGIAGAAASSTAGNAVATPLAIAQADPSLAEVAAAAAPLIAASVITTAILTPVLTSWVAKKQARQASLEKNA.

The next 10 helical transmembrane spans lie at 10 to 30 (VPGGMMVVPLVIGAVINTFAP), 47 to 67 (AAPLIGAFLLCMGAGISVKAA), 82 to 102 (LLVAIGIGLGVEHLFGAEGIF), 106 to 126 (GVAIIAAMSNSNGGLYAALVG), 134 to 154 (VGAISILSLNDGPFFTMIALG), 159 to 179 (ANIPIMALVAVLVPLVVGMIL), 195 to 215 (PLLIPFFAFALGAGINLEMLL), 217 to 237 (GGLAGILLGVLTTFVGGFFNI), 248 to 268 (IAGAAASSTAGNAVATPLAIA), and 279 to 299 (AAAAPLIAASVITTAILTPVL).

Belongs to the KdgT transporter family.

It is found in the cell inner membrane. The enzyme catalyses 2-dehydro-3-deoxy-D-gluconate(in) + H(+)(in) = 2-dehydro-3-deoxy-D-gluconate(out) + H(+)(out). Its function is as follows. Catalyzes the proton-dependent uptake of 2-keto-3-deoxygluconate (KDG) into the cell. This Salmonella typhi protein is 2-keto-3-deoxygluconate permease 1.